We begin with the raw amino-acid sequence, 932 residues long: Alanine--tRNA ligase (932 aa).

Zn(2+) contacts are provided by His623, His627, Cys726, and His730. The tract at residues 893 to 916 is disordered; that stretch reads RVGGGGGGPPDFAQGGGPDVDSLD. Residues 894–910 are compositionally biased toward gly residues; it reads VGGGGGGPPDFAQGGGP.

The protein belongs to the class-II aminoacyl-tRNA synthetase family. The cofactor is Zn(2+).

Its subcellular location is the cytoplasm. It catalyses the reaction tRNA(Ala) + L-alanine + ATP = L-alanyl-tRNA(Ala) + AMP + diphosphate. Its function is as follows. Catalyzes the attachment of alanine to tRNA(Ala) in a two-step reaction: alanine is first activated by ATP to form Ala-AMP and then transferred to the acceptor end of tRNA(Ala). Also edits incorrectly charged Ser-tRNA(Ala) and Gly-tRNA(Ala) via its editing domain. This chain is Alanine--tRNA ligase, found in Natronomonas pharaonis (strain ATCC 35678 / DSM 2160 / CIP 103997 / JCM 8858 / NBRC 14720 / NCIMB 2260 / Gabara) (Halobacterium pharaonis).